The sequence spans 273 residues: Homeobox protein Nkx-2.2 (273 aa).

Disordered stretches follow at residues 1–56 and 91–131; these read MSLT…LDAV and AASA…KRKR. Over residues 20–38 the composition is skewed to acidic residues; the sequence is DTNDEDGSVAEGPEEESEG. Positions 128-187 form a DNA-binding region, homeobox; sequence KRKRRVLFSKAQTYELERRFRQQRYLSAPEREHLASLIRLTPTQVKIWFQNHRYKMKRAR.

This sequence belongs to the NK-2 homeobox family. Interacts with OLIG2. In terms of tissue distribution, expressed in restricted areas of the developing CNS: the hindbrain and forebrain, and pancreas.

It is found in the nucleus. In terms of biological role, transcriptional activator involved in the development of insulin-producting beta cells in the endocrine pancreas. May also be involved in specifying diencephalic neuromeric boundaries, and in controlling the expression of genes that play a role in axonal guidance. Binds to elements within the NEUROD1 promoter. The polypeptide is Homeobox protein Nkx-2.2 (Nkx2-2) (Mus musculus (Mouse)).